Reading from the N-terminus, the 548-residue chain is Luciferin 4-monooxygenase (548 aa).

Positions 546–548 (AKM) match the Microbody targeting signal motif.

Belongs to the ATP-dependent AMP-binding enzyme family. As to quaternary structure, homodimer. The cofactor is Mg(2+).

It localises to the peroxisome. The catalysed reaction is firefly D-luciferin + ATP + O2 = firefly oxyluciferin + hnu + AMP + CO2 + diphosphate. With respect to regulation, inhibited by ATP analogs and sodium deoxycholate. Activated by choline-containing phospholipids. Produces green light with a wavelength of 570 nm. This chain is Luciferin 4-monooxygenase, found in Luciola mingrelica (Southern Russian firefly).